A 718-amino-acid chain; its full sequence is Quinohemoprotein alcohol dehydrogenase ADH-IIG (718 aa).

The N-terminal stretch at 1-29 (MRQTGLASLPLKSLAVAVLLSLAGTPALA) is a signal peptide. Glu92 is a binding site for pyrroloquinoline quinone. A disulfide bridge connects residues Cys138 and Cys139. Residues Arg144, Thr189, and 205–206 (GA) each bind pyrroloquinoline quinone. Residue Glu207 coordinates Ca(2+). Thr264 provides a ligand contact to pyrroloquinoline quinone. Ca(2+) contacts are provided by Asn284 and Asp329. Asp329 functions as the Proton acceptor in the catalytic mechanism. Residue Lys356 participates in pyrroloquinoline quinone binding. Residue Trp415 coordinates substrate. Residues 419 to 420 (DW) and Ala571 contribute to the pyrroloquinoline quinone site. Positions 622–699 (ASIEAGAKLY…QIHQYLIKRA (78 aa)) constitute a Cytochrome c domain. Positions 635, 638, 639, and 676 each coordinate heme c.

The protein belongs to the bacterial PQQ dehydrogenase family. Monomer. It depends on pyrroloquinoline quinone as a cofactor. Requires Ca(2+) as cofactor. Heme c is required as a cofactor.

The protein localises to the periplasm. The catalysed reaction is 2 oxidized [azurin] + a primary alcohol = 2 reduced [azurin] + an aldehyde + 2 H(+). Its activity is regulated as follows. Exhibits higher affinity for 1-butanol compared to 1,2-propanediol but inhibited by 10 mM 1-butanol. Catalyzes the dye-linked oxidation of primary alcohols to the corresponding aldehydes and the (subsequent) oxidation of the aldehydes to carboxylic acids. Active with primary alcohols, glycerol, 1,2-propanediol, 1,3-propanediol but not with methanol or sugar alcohols such as D-sorbitol. This Pseudomonas putida (Arthrobacter siderocapsulatus) protein is Quinohemoprotein alcohol dehydrogenase ADH-IIG.